Reading from the N-terminus, the 550-residue chain is CTP synthase (550 aa).

Residues 1–271 (MTRYIFITGG…DAEVLDVFGM (271 aa)) are amidoligase domain. Ser13 serves as a coordination point for CTP. Residue Ser13 participates in UTP binding. Residue 14 to 19 (SLGKGL) coordinates ATP. Tyr54 contributes to the L-glutamine binding site. Asp71 contributes to the ATP binding site. 2 residues coordinate Mg(2+): Asp71 and Glu145. CTP-binding positions include 152-154 (DIE), 192-197 (KTKPTQ), and Lys228. Residues 192-197 (KTKPTQ) and Lys228 each bind UTP. One can recognise a Glutamine amidotransferase type-1 domain in the interval 297–549 (TIAVVGKYTV…IAAAKEHGRL (253 aa)). Gly361 contributes to the L-glutamine binding site. The active-site Nucleophile; for glutamine hydrolysis is the Cys388. Residues 389 to 392 (FGMQ), Glu412, and Arg477 contribute to the L-glutamine site. Catalysis depends on residues His522 and Glu524.

Belongs to the CTP synthase family. Homotetramer.

The enzyme catalyses UTP + L-glutamine + ATP + H2O = CTP + L-glutamate + ADP + phosphate + 2 H(+). It carries out the reaction L-glutamine + H2O = L-glutamate + NH4(+). The catalysed reaction is UTP + NH4(+) + ATP = CTP + ADP + phosphate + 2 H(+). It functions in the pathway pyrimidine metabolism; CTP biosynthesis via de novo pathway; CTP from UDP: step 2/2. With respect to regulation, allosterically activated by GTP, when glutamine is the substrate; GTP has no effect on the reaction when ammonia is the substrate. The allosteric effector GTP functions by stabilizing the protein conformation that binds the tetrahedral intermediate(s) formed during glutamine hydrolysis. Inhibited by the product CTP, via allosteric rather than competitive inhibition. In terms of biological role, catalyzes the ATP-dependent amination of UTP to CTP with either L-glutamine or ammonia as the source of nitrogen. Regulates intracellular CTP levels through interactions with the four ribonucleotide triphosphates. This is CTP synthase from Caulobacter vibrioides (strain ATCC 19089 / CIP 103742 / CB 15) (Caulobacter crescentus).